The sequence spans 360 residues: Glycerol-1-phosphate dehydrogenase [NAD(P)+] (360 aa).

NAD(+) contacts are provided by residues 108–112 and 130–133; these read GRVID and TAAS. Asp-135 lines the substrate pocket. Position 139 (Ser-139) interacts with NAD(+). A substrate-binding site is contributed by Asp-182. Asp-182 and His-262 together coordinate Zn(2+). His-266 provides a ligand contact to substrate. Residue His-278 coordinates Zn(2+).

It belongs to the glycerol-1-phosphate dehydrogenase family. The cofactor is Zn(2+).

It localises to the cytoplasm. The enzyme catalyses sn-glycerol 1-phosphate + NAD(+) = dihydroxyacetone phosphate + NADH + H(+). The catalysed reaction is sn-glycerol 1-phosphate + NADP(+) = dihydroxyacetone phosphate + NADPH + H(+). It functions in the pathway membrane lipid metabolism; glycerophospholipid metabolism. Functionally, catalyzes the NAD(P)H-dependent reduction of dihydroxyacetonephosphate (DHAP or glycerone phosphate) to glycerol 1-phosphate (G1P). The G1P thus generated is used as the glycerophosphate backbone of phospholipids in the cellular membranes of Archaea. In Methanoculleus marisnigri (strain ATCC 35101 / DSM 1498 / JR1), this protein is Glycerol-1-phosphate dehydrogenase [NAD(P)+].